The chain runs to 246 residues: Ribonuclease 3 (246 aa).

An RNase III domain is found at 18–147; that stretch reads FQELQKKIGI…FIGALYLDQG (130 aa). Glu-60 contributes to the Mg(2+) binding site. Asp-64 is a catalytic residue. The Mg(2+) site is built by Asp-133 and Glu-136. Residue Glu-136 is part of the active site. The 70-residue stretch at 173–242 folds into the DRBM domain; the sequence is DFKSQLQELV…AQMALETLRA (70 aa).

Belongs to the ribonuclease III family. Homodimer. Requires Mg(2+) as cofactor.

Its subcellular location is the cytoplasm. The catalysed reaction is Endonucleolytic cleavage to 5'-phosphomonoester.. Its function is as follows. Digests double-stranded RNA. Involved in the processing of primary rRNA transcript to yield the immediate precursors to the large and small rRNAs (23S and 16S). Processes some mRNAs, and tRNAs when they are encoded in the rRNA operon. Processes pre-crRNA and tracrRNA of type II CRISPR loci if present in the organism. The protein is Ribonuclease 3 of Geobacillus thermodenitrificans (strain NG80-2).